A 333-amino-acid polypeptide reads, in one-letter code: L-lactate dehydrogenase B chain (333 aa).

NAD(+) contacts are provided by residues 29–57 (GQVG…LEDK) and Arg99. The substrate site is built by Arg106, Asn138, and Arg169. Asn138 provides a ligand contact to NAD(+). The active-site Proton acceptor is the His193. Thr248 is a binding site for substrate.

The protein belongs to the LDH/MDH superfamily. LDH family. Homotetramer.

Its subcellular location is the cytoplasm. It catalyses the reaction (S)-lactate + NAD(+) = pyruvate + NADH + H(+). The protein operates within fermentation; pyruvate fermentation to lactate; (S)-lactate from pyruvate: step 1/1. Interconverts simultaneously and stereospecifically pyruvate and lactate with concomitant interconversion of NADH and NAD(+). The chain is L-lactate dehydrogenase B chain (LDHB) from Pelodiscus sinensis japonicus (Chinese soft-shelled turtle).